Reading from the N-terminus, the 982-residue chain is Serine/threonine-protein kinase ATG1 (982 aa).

Residues 19-324 enclose the Protein kinase domain; it reads FVIGAEIGKG…FENFFAHPVI (306 aa). Residues 25–33 and Lys48 each bind ATP; that span reads IGKGSFAQV. The active-site Proton acceptor is Asp162. Disordered stretches follow at residues 334–506, 813–834, 898–918, and 947–982; these read DDIP…REKA, RLPDDHPSHPSNHPQGSESVNG, PKRRLSANMDDSGGDGEDGHA, and RMISNASKAQQQSQPQSLIRRRSGDVTPRSVPSYSS. Composition is skewed to basic and acidic residues over residues 335–359 and 372–387; these read DIPKPEASEQRSSSKDTRAASKSDD and HPTDNDQIRDQFRRVE. The segment covering 388 to 398 has biased composition (low complexity); it reads PPSSAAESAPS. The segment covering 463–481 has biased composition (polar residues); that stretch reads SNASLNRSNRESSSPTSAA.

This sequence belongs to the protein kinase superfamily. Ser/Thr protein kinase family. APG1/unc-51/ULK1 subfamily. In terms of assembly, homodimer. Forms a ternary complex with ATG13 and ATG17. In terms of tissue distribution, uniformly detected in conidia, mycelia and appressoria (at protein level).

Its subcellular location is the cytoplasm. It is found in the preautophagosomal structure membrane. The catalysed reaction is L-seryl-[protein] + ATP = O-phospho-L-seryl-[protein] + ADP + H(+). It carries out the reaction L-threonyl-[protein] + ATP = O-phospho-L-threonyl-[protein] + ADP + H(+). Functionally, serine/threonine protein kinase involved in the cytoplasm to vacuole transport (Cvt) and found to be essential in autophagy, where it is required for the formation of autophagosomes. Involved in the clearance of protein aggregates which cannot be efficiently cleared by the proteasome. Required for selective autophagic degradation of the nucleus (nucleophagy) as well as for mitophagy which contributes to regulate mitochondrial quantity and quality by eliminating the mitochondria to a basal level to fulfill cellular energy requirements and preventing excess ROS production. Also involved in endoplasmic reticulum-specific autophagic process, in selective removal of ER-associated degradation (ERAD) substrates. Plays a key role in ATG9 and ATG23 cycling through the pre-autophagosomal structure and is necessary to promote ATG18 binding to ATG9 through phosphorylation of ATG9. Catalyzes phosphorylation of ATG4, decreasing the interaction between ATG4 and ATG8 and impairing deconjugation of PE-conjugated forms of ATG8. Autophagy is essential to fungal development, production of appressorium turgor, and pathogenicity in rice blast disease. In Pyricularia oryzae (strain 70-15 / ATCC MYA-4617 / FGSC 8958) (Rice blast fungus), this protein is Serine/threonine-protein kinase ATG1.